Here is a 233-residue protein sequence, read N- to C-terminus: MDEMEDFFENDELDREPSPMGDEAIEDNSGEGGTRRVVEPKLLRTKRLANPRLALNERILTGPKGISALRETLKDFKPNPKDDPYANLEKLMKKYAYWGHLMFPKMKTEDVLNRVETLGTRRQVKVFMIKHRLGETGEDSEHEEQENQKNGIIDDGASDNDDDLFKDLPEKEVTTEKAKNSEKSDQKTAEIDENVEEEYRMMEEERLREEQEAKEAADEDALMEDFGDMNNDW.

Residues 1 to 14 (MDEMEDFFENDELD) are compositionally biased toward acidic residues. Disordered regions lie at residues 1–39 (MDEMEDFFENDELDREPSPMGDEAIEDNSGEGGTRRVVE) and 134–233 (GETG…NNDW). 2 stretches are compositionally biased toward basic and acidic residues: residues 163-190 (DLFKDLPEKEVTTEKAKNSEKSDQKTAE) and 197-216 (EEYRMMEEERLREEQEAKEA). Over residues 217 to 227 (ADEDALMEDFG) the composition is skewed to acidic residues.

The protein belongs to the CSM3 family.

The protein resides in the cytoplasm. It is found in the nucleus. Its function is as follows. Required for normal progression of S-phase. Important for cell survival after DNA damage or replication stress. In Caenorhabditis elegans, this protein is Protein TIPIN homolog.